A 361-amino-acid polypeptide reads, in one-letter code: S-adenosylmethionine:tRNA ribosyltransferase-isomerase (361 aa).

It belongs to the QueA family. In terms of assembly, monomer.

It localises to the cytoplasm. The catalysed reaction is 7-aminomethyl-7-carbaguanosine(34) in tRNA + S-adenosyl-L-methionine = epoxyqueuosine(34) in tRNA + adenine + L-methionine + 2 H(+). The protein operates within tRNA modification; tRNA-queuosine biosynthesis. In terms of biological role, transfers and isomerizes the ribose moiety from AdoMet to the 7-aminomethyl group of 7-deazaguanine (preQ1-tRNA) to give epoxyqueuosine (oQ-tRNA). This is S-adenosylmethionine:tRNA ribosyltransferase-isomerase from Methylocella silvestris (strain DSM 15510 / CIP 108128 / LMG 27833 / NCIMB 13906 / BL2).